Reading from the N-terminus, the 723-residue chain is Threonine--tRNA ligase 1, cytoplasmic (723 aa).

The disordered stretch occupies residues 1–46 (MFEEKASSPSGKMGGEEKPIGAGEEKQKEGGKKKNKEGSGDGGRAE). Positions 14-39 (GGEEKPIGAGEEKQKEGGKKKNKEGS) are enriched in basic and acidic residues. Phosphoserine is present on Ser39. One can recognise a TGS domain in the interval 79 to 143 (DSKPIKVTLP…EEDCTLELLK (65 aa)). Residue Lys243 is modified to N6-acetyllysine. Phosphothreonine is present on Thr246. Phosphotyrosine is present on Tyr298. Thr453 is modified (phosphothreonine). Phosphoserine is present on Ser702.

The protein belongs to the class-II aminoacyl-tRNA synthetase family. As to quaternary structure, homodimer. Post-translationally, ISGylated.

It is found in the cytoplasm. The enzyme catalyses tRNA(Thr) + L-threonine + ATP = L-threonyl-tRNA(Thr) + AMP + diphosphate + H(+). Inhibited by borrelidin (BN, IC 50 is 7 nM), which binds to 4 distinct subsites in the protein, preventing binding of all 3 substrates. Catalyzes the attachment of threonine to tRNA(Thr) in a two-step reaction: threonine is first activated by ATP to form Thr-AMP and then transferred to the acceptor end of tRNA(Thr). Also edits incorrectly charged tRNA(Thr) via its editing domain, at the post-transfer stage. In Homo sapiens (Human), this protein is Threonine--tRNA ligase 1, cytoplasmic.